A 157-amino-acid polypeptide reads, in one-letter code: Ubiquitin-like protein 4A (157 aa).

Residues 1 to 76 (MQLTVKALQG…LNLVVKPLEK (76 aa)) enclose the Ubiquitin-like domain. A Glycyl lysine isopeptide (Lys-Gly) (interchain with G-Cter in ubiquitin) cross-link involves residue lysine 48. Serine 90 carries the phosphoserine modification. The required and sufficient for interaction with BAG6 stretch occupies residues 96-138 (WHLISKVLARHFSAADASRVLEQLQRDYERSLSRLTLDDIERL).

In terms of assembly, component of the BAG6/BAT3 complex, at least composed of BAG6, UBL4A and GET4/TRC35. Interacts with BAG6; the interaction is direct and required for UBL4A protein stability. Interacts with USP13; may be indirect via BAG6. Post-translationally, polyubiquitinated. Ubiquitination by AMFR and deubiquitination by USP13 may regulate the interaction between the BAG6/BAT3 complex and SGTA and therefore may regulate client proteins fate.

It is found in the cytoplasm. The protein resides in the cytosol. Its subcellular location is the nucleus. As part of a cytosolic protein quality control complex, the BAG6/BAT3 complex, maintains misfolded and hydrophobic patches-containing proteins in a soluble state and participates in their proper delivery to the endoplasmic reticulum or alternatively can promote their sorting to the proteasome where they undergo degradation. The BAG6/BAT3 complex is involved in the post-translational delivery of tail-anchored/type II transmembrane proteins to the endoplasmic reticulum membrane. Recruited to ribosomes, it interacts with the transmembrane region of newly synthesized tail-anchored proteins and together with SGTA and ASNA1 mediates their delivery to the endoplasmic reticulum. Client proteins that cannot be properly delivered to the endoplasmic reticulum are ubiquitinated and sorted to the proteasome. Similarly, the BAG6/BAT3 complex also functions as a sorting platform for proteins of the secretory pathway that are mislocalized to the cytosol either delivering them to the proteasome for degradation or to the endoplasmic reticulum. The BAG6/BAT3 complex also plays a role in the endoplasmic reticulum-associated degradation (ERAD), a quality control mechanism that eliminates unwanted proteins of the endoplasmic reticulum through their retrotranslocation to the cytosol and their targeting to the proteasome. It maintains these retrotranslocated proteins in an unfolded yet soluble state condition in the cytosol to ensure their proper delivery to the proteasome. The chain is Ubiquitin-like protein 4A (UBL4A) from Oryctolagus cuniculus (Rabbit).